A 6930-amino-acid polypeptide reads, in one-letter code: Replicase polyprotein 1ab (6930 aa).

In terms of domain architecture, CoV Nsp1 globular spans 10–131; the sequence is LKSMVVTTLK…DIDIQIRKYG (122 aa). The region spanning 149–175 is the BetaCoV Nsp1 C-terminal domain; that stretch reads DPGPDVGPYLDFPDNCCPTKPKAKRGG. Residues 177-431 enclose the CoV Nsp2 N-terminal domain; sequence VYLSDQYGFD…ELVEYLIEGI (255 aa). Residues cysteine 312, cysteine 315, cysteine 331, and cysteine 333 each contribute to the Zn(2+) site. Residues 312-333 form a C4 region; sequence CSYCDYYGWTPLKDIGTVNCLC. The CoV Nsp2 middle domain occupies 432 to 644; that stretch reads RVDADTLDNP…CDLLTTIMSK (213 aa). Residues 646 to 772 form the CoV Nsp2 C-terminal domain; sequence LTSVKWAGCK…LGKAFRLRGG (127 aa). One can recognise a Ubiquitin-like 1 domain in the interval 775-885; it reads SKVTFGDEEV…MYFSLEDAVP (111 aa). One can recognise a Macro 1 domain in the interval 930 to 1097; the sequence is MTTPCGYTKI…LYERALATSF (168 aa). Positions 1188–1207 are disordered; sequence KRPPPIVPQQTVEQQPQEIS. The span at 1195-1206 shows a compositional bias: low complexity; that stretch reads PQQTVEQQPQEI. Residues 1216-1340 form the Macro 2 domain; that stretch reads LVDVVSMSFS…LYRAYFNGVF (125 aa). Residues 1345 to 1417 enclose the DPUP domain; it reads TAVQDFVVDI…VSKARAYLET (73 aa). In terms of domain architecture, Ubiquitin-like 2 spans 1423 to 1478; it reads EPLIKVLTTVDGINYSTVLVSTAQSYRAQIGTVFCDGHDWSNKNPMPTDEGTHLYK. A Peptidase C16 domain is found at 1492–1757; it reads EYYGVDDSNI…RTTIDPDFSK (266 aa). The active-site For PL-PRO activity is the cysteine 1533. 4 residues coordinate Zn(2+): cysteine 1610, cysteine 1613, cysteine 1645, and cysteine 1647. The segment at 1610–1647 adopts a C4-type zinc-finger fold; it reads CEHCGVSQMVFTGTDACTFYGSVVLDDLYAPVSVVCQC. Catalysis depends on for PL-PRO activity residues histidine 1694 and aspartate 1708. One can recognise a Nucleic acid-binding domain in the interval 1770–1870; the sequence is PIEVVAAPKL…PLLSTVVVNT (101 aa). The G2M domain maps to 1883-2012; it reads PVNNETSEEP…KTADFVRSTN (130 aa). Transmembrane regions (helical) follow at residues 2015 to 2035, 2040 to 2060, and 2081 to 2101; these read SKCV…WLLV, IVKV…TCVL, and YMLY…WLSE. The interval 2015–2238 is HD1; that stretch reads SKCVGLLCLF…IVIAFLWLCY (224 aa). Residues 2105–2162 form the 3Ecto domain; it reads PSLVTRFKYFLGIVMPCDYVLVNETGTGWLHHLCMAGMDSLDYPALRMQQHRYGSPYN. Cysteine 2121 and cysteine 2138 are disulfide-bonded. Helical transmembrane passes span 2162 to 2182, 2183 to 2203, and 2218 to 2238; these read NYTY…YTPA, LPIV…PIPL, and LVPF…WLCY. Residues 2239-2329 form a Y1 region; that stretch reads KGFLHVRYGC…QFKRPIIHTD (91 aa). One can recognise a CoV Nsp3 Y domain in the interval 2239-2610; it reads KGFLHVRYGC…MVTPFKIIGG (372 aa). The Zn(2+) site is built by histidine 2243, cysteine 2248, cysteine 2253, cysteine 2256, cysteine 2289, histidine 2292, cysteine 2296, and cysteine 2299. The interval 2243-2256 is ZF1; that stretch reads HVRYGCNNVACLMC. The segment at 2289 to 2299 is ZF2; that stretch reads CTKHNWNCVSC. A Y2 region spans residues 2330–2425; sequence EAYYEVTSVE…LVDKRMVGVV (96 aa). The interval 2330–2610 is coV-Y; it reads EAYYEVTSVE…MVTPFKIIGG (281 aa). Residues 2426–2509 are Y3; that stretch reads GDDATIARAM…SCIRLCHQEG (84 aa). The Y4 stretch occupies residues 2510 to 2610; sequence WEWTTDSWNN…MVTPFKIIGG (101 aa). 7 helical membrane passes run 2621 to 2641, 2719 to 2739, 2865 to 2885, 2887 to 2907, 2916 to 2936, 2946 to 2966, and 2970 to 2990; these read LIHV…PWYI, VGTT…SVCY, AFDL…AVDI, TSIL…YYLL, YSGV…VLCL, IYAM…ACMM, and FLIM…IVVV. The tract at residues 2621–2990 is HD2; it reads LIHVFMLLVV…WVTVLYIVVV (370 aa). One can recognise a Nsp4C domain in the interval 3007–3103; it reads VQVGDLAFHS…RCSVASAALQ (97 aa). The Peptidase C30 domain occupies 3104–3409; sequence AGLTRMAHPS…GRQMLGVKLQ (306 aa). Catalysis depends on for 3CL-PRO activity residues histidine 3144 and cysteine 3248. 7 helical membrane-spanning segments follow: residues 3423 to 3443, 3449 to 3469, 3474 to 3494, 3517 to 3537, 3569 to 3589, 3592 to 3612, and 3620 to 3640; these read FAII…WTFV, TLLL…SLLI, TYLT…NFQY, VIGT…LLSV, VAIS…GVAC, LYAA…ILLL, and LVCY…FNLI. Residues 3423-3640 are HD3; that stretch reads FAIIFVLTIL…TCYFGVFNLI (218 aa). Residues 3700-3782 enclose the RdRp Nsp7 cofactor domain; it reads SNMTDLKCTS…SILENNSVLQ (83 aa). Residues 3783 to 3982 enclose the RdRp Nsp8 cofactor domain; it reads AVASEFSNLS…QQATSPVKLQ (200 aa). The Nsp9 ssRNA-binding domain occupies 3983–4094; the sequence is NNELMPQTVK…GTLACTVRLH (112 aa). The region spanning 4095-4233 is the ExoN/MTase coactivator domain; that stretch reads AGSATEVASN…CSSLREINLQ (139 aa). Residues cysteine 4168, cysteine 4171, histidine 4177, cysteine 4184, cysteine 4211, cysteine 4214, cysteine 4222, and cysteine 4224 each coordinate Zn(2+). 2 zinc fingers span residues 4168–4184 and 4211–4224; these read CLYC…SGVC and CAVC…GCPC. The NiRAN domain occupies 4239–4494; sequence FLNRVRGTSG…AAECHVDGDF (256 aa). Asparagine 4442 and aspartate 4451 together coordinate Mn(2+). Residues 4499–4597 form the Nsp12 Interface domain; that stretch reads RVWDICKYDY…MNQDIRQHAQ (99 aa). Zn(2+)-binding residues include histidine 4528, cysteine 4534, cysteine 4539, cysteine 4543, and cysteine 4720. The Nsp12 RNA-dependent RNA polymerase domain maps to 4598 to 5165; the sequence is RLSLRELLVY…NMYMESATLQ (568 aa). Residues 4600-4814 form a rdRp Fingers N-ter region; the sequence is SLRELLVYAA…HQKMLKSIAA (215 aa). The tract at residues 4815–4853 is rdRp Palm N-ter; it reads ARGASVVIGTTKFYGGWNRMLRTLCEGVENPHLMGWDYP. Residues 4845-5007 enclose the RdRp catalytic domain; the sequence is PHLMGWDYPK…CYNADYAQKG (163 aa). A rdRp Fingers C-ter region spans residues 4854–4912; that stretch reads KCDRAMPNLLRIFASLILARKHATCCNASERFYRLANECAQVLSEMVLCGGGFYVKPGG. 3 residues coordinate Zn(2+): histidine 4875, cysteine 4878, and cysteine 4879. Positions 4913–5048 are rdRp Palm C-ter; the sequence is TSSGDSTTAY…TKGPHEFCSQ (136 aa). Active-site residues include serine 4992, aspartate 4993, and aspartate 4994. The rdRp Thumb stretch occupies residues 5049–5165; sequence HTMLVDMKGE…NMYMESATLQ (117 aa). The 113-residue stretch at 5166-5278 folds into the CV ZBD domain; sequence SVGTCVVCNS…ADFNSLATCD (113 aa). Residues cysteine 5170, cysteine 5173, cysteine 5181, cysteine 5184, cysteine 5191, cysteine 5194, histidine 5198, histidine 5204, cysteine 5215, cysteine 5220, cysteine 5237, and histidine 5240 each coordinate Zn(2+). Residues 5412-5603 form the (+)RNA virus helicase ATP-binding domain; the sequence is TKLVGLYPAM…MVAVGPDIFL (192 aa). ATP is bound at residue 5447 to 5454; the sequence is GPPGTGKS. The 175-residue stretch at 5604-5778 folds into the (+)RNA virus helicase C-terminal domain; it reads ATCYRCPKEI…VTVGLFKDCA (175 aa). In terms of domain architecture, ExoN spans 5838–6056; sequence LFITREQAIR…RCLAIHDCFC (219 aa). Residues aspartate 5856, glutamate 5858, and glutamate 5957 contribute to the active site. The Zn(2+) site is built by cysteine 5973, cysteine 5976, cysteine 5992, histidine 5995, histidine 6026, cysteine 6030, and histidine 6033. Residues histidine 6037 and aspartate 6042 contribute to the active site. A Zn(2+)-binding site is contributed by cysteine 6048. The 232-residue stretch at 6065-6296 folds into the N7-MTase domain; the sequence is YPIIANELAI…NLWSTFVKLQ (232 aa). 6100-6106 provides a ligand contact to S-adenosyl-L-methionine; it reads DIGNPKA. The segment at 6180–6194 is gpppA-binding; it reads CNGGSLYVNQHAFHT. Cysteine 6218, cysteine 6242, cysteine 6253, and histidine 6256 together coordinate Zn(2+). The Nsp15 N-terminal oligomerization domain occupies 6297-6357; the sequence is SLENVAYNVL…NVAFELWAKR (61 aa). Residues 6358–6476 form the AV-Nsp11N/CoV-Nsp15M domain; sequence SVNVVPEVKL…YAMRKDGAFV (119 aa). One can recognise a NendoU domain in the interval 6493 to 6630; sequence QPRTQLEIDF…KGGKISTFYP (138 aa). Residues histidine 6523, histidine 6537, lysine 6576, lysine 6679, aspartate 6763, lysine 6803, and glutamate 6836 contribute to the active site. Residues 6635 to 6928 enclose the Nidovirus-type SAM-dependent 2'-O-MTase domain; the sequence is KQDWKPGYSM…DIGVRGVACS (294 aa).

This sequence belongs to the coronaviruses polyprotein 1ab family. In terms of assembly, interacts with host PHB and PHB2. Interacts with papain-like protease nsp3 and non-structural protein 6. As to quaternary structure, monomer. Homodimer. Only the homodimer shows catalytic activity. In terms of assembly, interacts with nsp8 and nsp12 to form the replication-transcription complex (RTC): nsp12, nsp7, two subunits of nsp8, and up to two subunits of nsp13. Interacts with nsp7, nsp13 and nsp12 to form the replication-transcription complex (RTC): nsp12, nsp7, two subunits of nsp8, and up to two subunits of nsp13. As to quaternary structure, interacts with nsp12. In terms of assembly, interacts with proofreading exoribonuclease nsp14 and 2'-O-methyltransferase nsp16; these interactions enhance nsp14 and nsp16 enzymatic activities. Interacts with nsp7 and nsp8 to form the replication-transcription complex (RTC): nsp12, nsp7, two subunits of nsp8, and up to two subunits of nsp13. Interacts with nsp9. As to quaternary structure, interacts with nsp8 to form the replication-transcription complex (RTC): nsp12, nsp7, two subunits of nsp8, and up to two subunits of nsp13. Requires Mn(2+) as cofactor. The cofactor is Mg(2+). Post-translationally, specific enzymatic cleavages in vivo by its own proteases yield mature proteins. 3CL-PRO and PL-PRO proteinases are autocatalytically processed.

The protein resides in the host membrane. The protein localises to the host cytoplasm. It is found in the host perinuclear region. It localises to the host endoplasmic reticulum-Golgi intermediate compartment. The enzyme catalyses RNA(n) + a ribonucleoside 5'-triphosphate = RNA(n+1) + diphosphate. It carries out the reaction ATP + H2O = ADP + phosphate + H(+). It catalyses the reaction Thiol-dependent hydrolysis of ester, thioester, amide, peptide and isopeptide bonds formed by the C-terminal Gly of ubiquitin (a 76-residue protein attached to proteins as an intracellular targeting signal).. The catalysed reaction is a 5'-end (N(7)-methyl 5'-triphosphoguanosine)-ribonucleoside in mRNA + S-adenosyl-L-methionine = a 5'-end (N(7)-methyl 5'-triphosphoguanosine)-(2'-O-methyl-ribonucleoside) in mRNA + S-adenosyl-L-homocysteine + H(+). The enzyme catalyses uridylyl-uridylyl-ribonucleotide-RNA = a 3'-end uridylyl-2',3'-cyclophospho-uridine-RNA + a 5'-end dephospho-ribonucleoside-RNA. It carries out the reaction a 5'-end diphospho-ribonucleoside in mRNA + GTP + H(+) = a 5'-end (5'-triphosphoguanosine)-ribonucleoside in mRNA + diphosphate. It catalyses the reaction a 5'-end (5'-triphosphoguanosine)-ribonucleoside in mRNA + S-adenosyl-L-methionine = a 5'-end (N(7)-methyl 5'-triphosphoguanosine)-ribonucleoside in mRNA + S-adenosyl-L-homocysteine. In terms of biological role, the replicase polyprotein of coronaviruses is a multifunctional protein: it contains the activities necessary for the transcription of negative stranded RNA, leader RNA, subgenomic mRNAs and progeny virion RNA as well as proteinases responsible for the cleavage of the polyprotein into functional products. Its function is as follows. Inhibits host translation by interacting with the 40S ribosomal subunit. The nsp1-40S ribosome complex further induces an endonucleolytic cleavage near the 5'UTR of host mRNAs, targeting them for degradation. Viral mRNAs are not susceptible to nsp1-mediated endonucleolytic RNA cleavage thanks to the presence of a 5'-end leader sequence and are therefore protected from degradation. By suppressing host gene expression, nsp1 facilitates efficient viral gene expression in infected cells and evasion from host immune response. May play a role in the modulation of host cell survival signaling pathway by interacting with host PHB and PHB2. Indeed, these two proteins play a role in maintaining the functional integrity of the mitochondria and protecting cells from various stresses. Functionally, responsible for the cleavages located at the N-terminus of the replicase polyprotein. In addition, PL-PRO possesses a deubiquitinating/deISGylating activity and processes both 'Lys-48'- and 'Lys-63'-linked polyubiquitin chains from cellular substrates. Participates together with nsp4 in the assembly of virally-induced cytoplasmic double-membrane vesicles necessary for viral replication. Antagonizes innate immune induction of type I interferon by blocking the phosphorylation, dimerization and subsequent nuclear translocation of host IRF3. Also prevents host NF-kappa-B signaling. In terms of biological role, participates in the assembly of virally-induced cytoplasmic double-membrane vesicles necessary for viral replication. Its function is as follows. Cleaves the C-terminus of replicase polyprotein at 11 sites. Recognizes substrates containing the core sequence [ILMVF]-Q-|-[SGACN]. Also able to bind an ADP-ribose-1''-phosphate (ADRP). Plays a role in the initial induction of autophagosomes from host endoplasmic reticulum. Later, limits the expansion of these phagosomes that are no longer able to deliver viral components to lysosomes. Functionally, forms a hexadecamer with nsp8 (8 subunits of each) that may participate in viral replication by acting as a primase. Alternatively, may synthesize substantially longer products than oligonucleotide primers. In terms of biological role, forms a hexadecamer with nsp7 (8 subunits of each) that may participate in viral replication by acting as a primase. Alternatively, may synthesize substantially longer products than oligonucleotide primers. Its function is as follows. Forms a primer, NSP9-pU, which is utilized by the polymerase for the initiation of RNA chains. Interacts with ribosome signal recognition particle RNA (SRP). Together with NSP8, suppress protein integration into the cell membrane, thereby disrupting host immune defenses. Plays a pivotal role in viral transcription by stimulating both nsp14 3'-5' exoribonuclease and nsp16 2'-O-methyltransferase activities. Therefore plays an essential role in viral mRNAs cap methylation. Functionally, RNA-directed RNA polymerase that catalyzes the transcription of viral genomic and subgenomic RNAs. Acts in complex with nsp7 and nsp8 to transcribe both the minus and positive strands of genomic RNA. The kinase-like NiRAN domain of NSP12 attaches one or more nucleotides to the amino terminus of NSP9, forming a covalent RNA-protein intermediate that serves as transcription/replication primer. Subgenomic RNAs (sgRNAs) are formed by discontinuous transcription: The polymerase has the ability to pause at transcription-regulating sequences (TRS) and jump to the leader TRS, resulting in a major deletion. This creates a series of subgenomic RNAs that are replicated, transcribed and translated. In addition, Nsp12 is a subunit of the viral RNA capping enzyme that catalyzes the RNA guanylyltransferase reaction for genomic and sub-genomic RNAs. Subsequently, the NiRAN domain transfers RNA to GDP, and forms the core cap structure GpppA-RNA. In terms of biological role, multi-functional protein with a zinc-binding domain in N-terminus displaying RNA and DNA duplex-unwinding activities with 5' to 3' polarity. Activity of helicase is dependent on magnesium. Its function is as follows. Plays a role in viral RNA synthesis through two distinct activities. The N7-guanine methyltransferase activity plays a role in the formation of the cap structure GpppA-RNA. The proofreading exoribonuclease reduces the sensitivity of the virus to RNA mutagens during replication. This activity acts on both ssRNA and dsRNA in a 3'-5' direction. Plays a role in viral transcription/replication and prevents the simultaneous activation of host cell dsRNA sensors, such as MDA5/IFIH1, OAS, and PKR. Acts by degrading the 5'-polyuridines generated during replication of the poly(A) region of viral genomic and subgenomic RNAs. Catalyzes a two-step reaction in which a 2'3'-cyclic phosphate (2'3'-cP) is first generated by 2'-O transesterification, which is then hydrolyzed to a 3'-phosphate (3'-P). If not degraded, poly(U) RNA would hybridize with poly(A) RNA tails and activate host dsRNA sensors. Functionally, methyltransferase that mediates mRNA cap 2'-O-ribose methylation to the 5'-cap structure of viral mRNAs. N7-methyl guanosine cap is a prerequisite for binding of nsp16. Therefore plays an essential role in viral mRNAs cap methylation which is essential to evade immune system. This chain is Replicase polyprotein 1ab (rep), found in Bat coronavirus HKU9 (BtCoV).